We begin with the raw amino-acid sequence, 264 residues long: Phosphatidylglycerol--prolipoprotein diacylglyceryl transferase (264 aa).

4 consecutive transmembrane segments (helical) span residues 17-37 (LAIH…YLLG), 57-77 (LIFY…VLFY), 89-109 (IAFL…VILV), and 118-138 (GVSF…GLGA). A 1,2-diacyl-sn-glycero-3-phospho-(1'-sn-glycerol) is bound at residue Arg-140. 3 consecutive transmembrane segments (helical) span residues 173-193 (PSQL…LWWF), 201-221 (GQVS…VEFT), and 237-257 (MGQW…VLTA).

The protein belongs to the Lgt family.

Its subcellular location is the cell inner membrane. The enzyme catalyses L-cysteinyl-[prolipoprotein] + a 1,2-diacyl-sn-glycero-3-phospho-(1'-sn-glycerol) = an S-1,2-diacyl-sn-glyceryl-L-cysteinyl-[prolipoprotein] + sn-glycerol 1-phosphate + H(+). The protein operates within protein modification; lipoprotein biosynthesis (diacylglyceryl transfer). Functionally, catalyzes the transfer of the diacylglyceryl group from phosphatidylglycerol to the sulfhydryl group of the N-terminal cysteine of a prolipoprotein, the first step in the formation of mature lipoproteins. This Bordetella avium (strain 197N) protein is Phosphatidylglycerol--prolipoprotein diacylglyceryl transferase.